Reading from the N-terminus, the 1417-residue chain is DNA-directed RNA polymerase subunit beta' (1417 aa).

4 residues coordinate Zn(2+): Cys-68, Cys-70, Cys-83, and Cys-86. Mg(2+) contacts are provided by Asp-458, Asp-460, and Asp-462. The Zn(2+) site is built by Cys-811, Cys-884, Cys-891, and Cys-894.

The protein belongs to the RNA polymerase beta' chain family. The RNAP catalytic core consists of 2 alpha, 1 beta, 1 beta' and 1 omega subunit. When a sigma factor is associated with the core the holoenzyme is formed, which can initiate transcription. It depends on Mg(2+) as a cofactor. The cofactor is Zn(2+).

The catalysed reaction is RNA(n) + a ribonucleoside 5'-triphosphate = RNA(n+1) + diphosphate. Functionally, DNA-dependent RNA polymerase catalyzes the transcription of DNA into RNA using the four ribonucleoside triphosphates as substrates. In Francisella tularensis subsp. holarctica (strain OSU18), this protein is DNA-directed RNA polymerase subunit beta'.